The following is a 569-amino-acid chain: AA9 family lytic polysaccharide monooxygenase A (569 aa).

Positions 1 to 16 (MRIFSLALGFLPLVAG) are cleaved as a signal peptide. Residues His-17 and His-99 each coordinate Cu(2+). Cys-59 and Cys-189 are disulfide-bonded. Asn-112 carries an N-linked (GlcNAc...) asparagine glycan. Positions 174 and 184 each coordinate O2. Tyr-186 is a binding site for Cu(2+). 2 N-linked (GlcNAc...) asparagine glycosylation sites follow: Asn-244 and Asn-381. Low complexity predominate over residues 399–424 (AADATATATATTEDAEATTAAEAAAT). The tract at residues 399 to 439 (AADATATATATTEDAEATTAAEAAATSGAGRPGRGHGHGRG) is disordered. Asn-472 carries an N-linked (GlcNAc...) asparagine glycan.

The protein belongs to the polysaccharide monooxygenase AA9 family. Requires Cu(2+) as cofactor.

The protein resides in the secreted. The enzyme catalyses [(1-&gt;4)-beta-D-glucosyl]n+m + reduced acceptor + O2 = 4-dehydro-beta-D-glucosyl-[(1-&gt;4)-beta-D-glucosyl]n-1 + [(1-&gt;4)-beta-D-glucosyl]m + acceptor + H2O.. Its function is as follows. Lytic polysaccharide monooxygenase (LPMO) that depolymerizes crystalline and amorphous polysaccharides via the oxidation of scissile alpha- or beta-(1-4)-glycosidic bonds, yielding C4 oxidation products. Catalysis by LPMOs requires the reduction of the active-site copper from Cu(II) to Cu(I) by a reducing agent and H(2)O(2) or O(2) as a cosubstrate. In Emericella nidulans (strain FGSC A4 / ATCC 38163 / CBS 112.46 / NRRL 194 / M139) (Aspergillus nidulans), this protein is AA9 family lytic polysaccharide monooxygenase A.